Reading from the N-terminus, the 282-residue chain is Small ribosomal subunit protein uS2 (282 aa).

Residues 245 to 266 (AEEAVEELPLPTGEAQDEASSK) form a disordered region.

This sequence belongs to the universal ribosomal protein uS2 family.

In Chlamydia trachomatis serovar D (strain ATCC VR-885 / DSM 19411 / UW-3/Cx), this protein is Small ribosomal subunit protein uS2 (rpsB).